The following is a 346-amino-acid chain: Enoyl-[acyl-carrier-protein] reductase, mitochondrial (346 aa).

The N-terminal 22 residues, 1–22, are a transit peptide targeting the mitochondrion; the sequence is MQKTIRSQALIYRKFGDPLKVL. The Proton donor role is filled by Tyr59. Residues Asn131, 157 to 160, 180 to 182, 249 to 252, 274 to 276, and Lys332 contribute to the NADP(+) site; these read NSGV, RNR, YGGM, and VAV.

The protein belongs to the zinc-containing alcohol dehydrogenase family. Quinone oxidoreductase subfamily. In terms of assembly, homodimer.

It is found in the mitochondrion. It catalyses the reaction a 2,3-saturated acyl-[ACP] + NADP(+) = a (2E)-enoyl-[ACP] + NADPH + H(+). Functionally, catalyzes the NADPH-dependent reduction of trans-2-enoyl thioesters in mitochondrial fatty acid synthesis (fatty acid synthesis type II). Fatty acid chain elongation in mitochondria uses acyl carrier protein (ACP) as an acyl group carrier, but the enzyme accepts both ACP and CoA thioesters as substrates in vitro. May provide the octanoyl chain used for lipoic acid biosynthesis, regulating protein lipoylation and mitochondrial respiratory activity. Involved in iron homeostasis; affecting Fe-S cluster assembly and ceramide metabolism. Required for proper morphology and bioenergetic functions of mitochondria. Required for maintenance of neurons. In Caenorhabditis elegans, this protein is Enoyl-[acyl-carrier-protein] reductase, mitochondrial.